Reading from the N-terminus, the 694-residue chain is Transcription activator of gluconeogenesis Pc22g08580 (694 aa).

A disordered region spans residues 1–61; it reads MNMETKNGSP…DPSRPRRKKA (61 aa). Residues 17-55 are compositionally biased toward basic and acidic residues; sequence SGERDSADITEHEQMDVKPKTNGDSKADRKAANAKDPSR. A DNA-binding region (zn(2)-C6 fungal-type) is located at residues 65–93; that stretch reads CFACQRAHLTCGDERPCQRCIKRGLQDAC. Disordered stretches follow at residues 126 to 240, 276 to 300, and 552 to 582; these read TLRN…GPFF, AAGD…AQFS, and TGGS…GTGR. Polar residues predominate over residues 132–141; sequence PISRNGTNAV. A compositionally biased stretch (low complexity) spans 142–171; it reads NSNQQHSQQHPQQPTNPTNNNFYPTPQTQT. 3 stretches are compositionally biased toward polar residues: residues 172–234, 281–300, and 552–581; these read GSYN…SQNP, PTDS…AQFS, and TGGS…SGTG.

Belongs to the ERT1/acuK family.

The protein resides in the nucleus. Functionally, transcription factor which regulates nonfermentable carbon utilization. Activator of gluconeogenetic genes. This chain is Transcription activator of gluconeogenesis Pc22g08580, found in Penicillium rubens (strain ATCC 28089 / DSM 1075 / NRRL 1951 / Wisconsin 54-1255) (Penicillium chrysogenum).